We begin with the raw amino-acid sequence, 92 residues long: Large ribosomal subunit protein bL36m (92 aa).

The transit peptide at 1–54 directs the protein to the mitochondrion; that stretch reads MASLGRKFFAVGVLSRVFPSAFNAQKGLLKNASMFLTPAFRLSPSLLPWNFSRG.

It belongs to the bacterial ribosomal protein bL36 family. Component of the mitochondrial large ribosomal subunit (mt-LSU). Mature yeast 74S mitochondrial ribosomes consist of a small (37S) and a large (54S) subunit. The 37S small subunit contains a 15S ribosomal RNA (15S mt-rRNA) and at least 32 different proteins. The 54S large subunit contains a 21S rRNA (21S mt-rRNA) and at least 45 different proteins. bL36m has a zinc binding site.

It is found in the mitochondrion. Functionally, component of the mitochondrial ribosome (mitoribosome), a dedicated translation machinery responsible for the synthesis of mitochondrial genome-encoded proteins, including at least some of the essential transmembrane subunits of the mitochondrial respiratory chain. The mitoribosomes are attached to the mitochondrial inner membrane and translation products are cotranslationally integrated into the membrane. bL36m may be involved in a process influencing telomere capping. This is Large ribosomal subunit protein bL36m (rtc6) from Schizosaccharomyces pombe (strain 972 / ATCC 24843) (Fission yeast).